The chain runs to 126 residues: Aspartate 1-decarboxylase (126 aa).

Residue Ser-25 is the Schiff-base intermediate with substrate; via pyruvic acid of the active site. Ser-25 is modified (pyruvic acid (Ser)). Residue Thr-57 coordinates substrate. The active-site Proton donor is the Tyr-58. 73 to 75 (GGA) contributes to the substrate binding site.

The protein belongs to the PanD family. Heterooctamer of four alpha and four beta subunits. The cofactor is pyruvate. Is synthesized initially as an inactive proenzyme, which is activated by self-cleavage at a specific serine bond to produce a beta-subunit with a hydroxyl group at its C-terminus and an alpha-subunit with a pyruvoyl group at its N-terminus.

It localises to the cytoplasm. It carries out the reaction L-aspartate + H(+) = beta-alanine + CO2. It participates in cofactor biosynthesis; (R)-pantothenate biosynthesis; beta-alanine from L-aspartate: step 1/1. In terms of biological role, catalyzes the pyruvoyl-dependent decarboxylation of aspartate to produce beta-alanine. The polypeptide is Aspartate 1-decarboxylase (Xanthomonas axonopodis pv. citri (strain 306)).